The primary structure comprises 350 residues: SUMO-activating enzyme subunit 1 (350 aa).

Met-1 is modified (N-acetylmethionine). Val-2 carries the N-acetylvaline; in SUMO-activating enzyme subunit 1, N-terminally processed modification. Ser-16 is subject to Phosphoserine. Lys-202 carries the N6-acetyllysine modification.

It belongs to the ubiquitin-activating E1 family. Heterodimer of SAE1 and UBA2/SAE2. The heterodimer corresponds to the two domains that are encoded on a single polypeptide chain in ubiquitin-activating enzyme E1. Interacts with UBE2I. Broadly expressed, with highest levels in testis.

The protein localises to the nucleus. The protein operates within protein modification; protein sumoylation. The heterodimer acts as an E1 ligase for SUMO1, SUMO2, SUMO3, and probably SUMO4. It mediates ATP-dependent activation of SUMO proteins followed by formation of a thioester bond between a SUMO protein and a conserved active site cysteine residue on UBA2/SAE2. The chain is SUMO-activating enzyme subunit 1 (Sae1) from Mus musculus (Mouse).